Consider the following 341-residue polypeptide: MNTLLLLHPTIVTEPQAVEAAKDSLAQKLGTDKSNISQHIIDRVATGQVSLRPSYYNHIQYLAPPEANVKKLPVKCYEIIFEALQSNGVFEGTIPPESATDGILQGFLVESDTKWVKPSTLGSVVSLKRPAGQNKTKSSAFKKEMPFFKKLSSPPTLTDSSEADEDEESQLNEKLKGSKLIYFDESSDDEIIDEDELLRDDDGALKGPVVVPVKCALPNGKRRKKACKDCTCGLKELEENEQNERLDAQASILSKLATSANAEAEKIEERLRRKQASKEGEEVKFTEQEVTEIDFTIQGKTGGCGSCALGDAFRCDGCPYLGLPPFKPGQAISIEGLGADI.

Residues 1–157 are N-terminal SAM-like domain; sequence MNTLLLLHPT…FKKLSSPPTL (157 aa). Residues 151–171 are disordered; the sequence is LSSPPTLTDSSEADEDEESQL. The segment at 157 to 204 is linker; it reads LTDSSEADEDEESQLNEKLKGSKLIYFDESSDDEIIDEDELLRDDDGA. The segment covering 161 to 170 has biased composition (acidic residues); that stretch reads SEADEDEESQ. [2Fe-2S] cluster is bound by residues Cys-215, Cys-227, Cys-230, and Cys-232. Residues 215-232 are fe-S binding site A; the sequence is CALPNGKRRKKACKDCTC. [4Fe-4S] cluster-binding residues include Cys-304, Cys-307, Cys-315, and Cys-318. 2 consecutive short sequence motifs (cx2C motif) follow at residues 304–307 and 315–318; these read CGSC and CDGC. The segment at 304 to 318 is fe-S binding site B; sequence CGSCALGDAFRCDGC.

Belongs to the anamorsin family. Monomer. Interacts with TAH18. Interacts with MIA40. It depends on [2Fe-2S] cluster as a cofactor. [4Fe-4S] cluster is required as a cofactor.

The protein resides in the cytoplasm. The protein localises to the mitochondrion intermembrane space. Functionally, component of the cytosolic iron-sulfur (Fe-S) protein assembly (CIA) machinery required for the maturation of extramitochondrial Fe-S proteins. Part of an electron transfer chain functioning in an early step of cytosolic Fe-S biogenesis, facilitating the de novo assembly of a [4Fe-4S] cluster on the scaffold complex CFD1-NBP35. Electrons are transferred to DRE2 from NADPH via the FAD- and FMN-containing protein TAH18. TAH18-DRE2 are also required for the assembly of the diferric tyrosyl radical cofactor of ribonucleotide reductase (RNR), probably by providing electrons for reduction during radical cofactor maturation in the catalytic small subunit RNR2. This is Fe-S cluster assembly protein DRE2 from Komagataella phaffii (strain GS115 / ATCC 20864) (Yeast).